The chain runs to 257 residues: Tryptophan synthase alpha chain (257 aa).

Active-site proton acceptor residues include Glu47 and Asp58.

The protein belongs to the TrpA family. Tetramer of two alpha and two beta chains.

The catalysed reaction is (1S,2R)-1-C-(indol-3-yl)glycerol 3-phosphate + L-serine = D-glyceraldehyde 3-phosphate + L-tryptophan + H2O. It participates in amino-acid biosynthesis; L-tryptophan biosynthesis; L-tryptophan from chorismate: step 5/5. Functionally, the alpha subunit is responsible for the aldol cleavage of indoleglycerol phosphate to indole and glyceraldehyde 3-phosphate. This is Tryptophan synthase alpha chain from Listeria innocua serovar 6a (strain ATCC BAA-680 / CLIP 11262).